Consider the following 70-residue polypeptide: Large ribosomal subunit protein bL31 (70 aa).

Positions 16, 18, 37, and 40 each coordinate Zn(2+).

Belongs to the bacterial ribosomal protein bL31 family. Type A subfamily. Part of the 50S ribosomal subunit. Zn(2+) serves as cofactor.

Functionally, binds the 23S rRNA. The protein is Large ribosomal subunit protein bL31 of Histophilus somni (strain 2336) (Haemophilus somnus).